Here is a 238-residue protein sequence, read N- to C-terminus: Trypsin-3 (238 aa).

Positions 1-7 (FAVAFAA) are cleaved as a signal peptide. Residues 8–15 (PIDDEDDK) constitute a propeptide, activation peptide. One can recognise a Peptidase S1 domain in the interval 16–236 (IVGGYECRKN…YRSWISSTMS (221 aa)). Intrachain disulfides connect C22/C152, C40/C56, C124/C225, C131/C198, C163/C177, and C188/C212. The active-site Charge relay system is H55. Residues E67, N69, V72, and E77 each contribute to the Ca(2+) site. The Charge relay system role is filled by D99. S192 functions as the Charge relay system in the catalytic mechanism.

Belongs to the peptidase S1 family. Requires Ca(2+) as cofactor.

The protein resides in the secreted. It is found in the extracellular space. It catalyses the reaction Preferential cleavage: Arg-|-Xaa, Lys-|-Xaa.. This chain is Trypsin-3, found in Salmo salar (Atlantic salmon).